The primary structure comprises 429 residues: Enolase (429 aa).

Residue glutamine 162 participates in (2R)-2-phosphoglycerate binding. Catalysis depends on glutamate 204, which acts as the Proton donor. Mg(2+) is bound by residues aspartate 241, glutamate 282, and aspartate 309. Residues lysine 334, arginine 363, serine 364, and lysine 385 each contribute to the (2R)-2-phosphoglycerate site. The Proton acceptor role is filled by lysine 334.

This sequence belongs to the enolase family. Mg(2+) serves as cofactor.

The protein resides in the cytoplasm. Its subcellular location is the secreted. The protein localises to the cell surface. The enzyme catalyses (2R)-2-phosphoglycerate = phosphoenolpyruvate + H2O. Its pathway is carbohydrate degradation; glycolysis; pyruvate from D-glyceraldehyde 3-phosphate: step 4/5. Catalyzes the reversible conversion of 2-phosphoglycerate (2-PG) into phosphoenolpyruvate (PEP). It is essential for the degradation of carbohydrates via glycolysis. This is Enolase from Acidothermus cellulolyticus (strain ATCC 43068 / DSM 8971 / 11B).